Consider the following 95-residue polypeptide: MSVTTKDVTYIAELAKLKFSDDEMLTMTSELNNILHYVEKLNEVDTEGVLPLSTIHDAVNVLREDVEHQPLSSTAVLLNAPDRQDRFFKVPKVIG.

Belongs to the GatC family. As to quaternary structure, heterotrimer of A, B and C subunits.

The catalysed reaction is L-glutamyl-tRNA(Gln) + L-glutamine + ATP + H2O = L-glutaminyl-tRNA(Gln) + L-glutamate + ADP + phosphate + H(+). It carries out the reaction L-aspartyl-tRNA(Asn) + L-glutamine + ATP + H2O = L-asparaginyl-tRNA(Asn) + L-glutamate + ADP + phosphate + 2 H(+). Its function is as follows. Allows the formation of correctly charged Asn-tRNA(Asn) or Gln-tRNA(Gln) through the transamidation of misacylated Asp-tRNA(Asn) or Glu-tRNA(Gln) in organisms which lack either or both of asparaginyl-tRNA or glutaminyl-tRNA synthetases. The reaction takes place in the presence of glutamine and ATP through an activated phospho-Asp-tRNA(Asn) or phospho-Glu-tRNA(Gln). The sequence is that of Aspartyl/glutamyl-tRNA(Asn/Gln) amidotransferase subunit C from Pelodictyon phaeoclathratiforme (strain DSM 5477 / BU-1).